The chain runs to 398 residues: Probable purine permease 17 (398 aa).

The segment at 1-26 (MEMSKASKQTTRHEESEHVQNPEPDQ) is disordered. The segment covering 11–20 (TRHEESEHVQ) has biased composition (basic and acidic residues). At serine 29 the chain carries Phosphoserine. 10 helical membrane passes run 43-63 (ISVS…MLLL), 88-108 (WTQA…FFIF), 127-147 (LFFL…LFAL), 155-175 (GIFS…TAII), 183-203 (WIII…PDFG), 219-239 (WLAF…QLGF), 258-278 (VLEM…VGLF), 301-321 (VLSL…MIGL), 332-352 (VVHM…FDFM), and 355-375 (VFSW…GSYF).

This sequence belongs to the purine permeases (TC 2.A.7.14) family.

It is found in the membrane. The chain is Probable purine permease 17 (PUP17) from Arabidopsis thaliana (Mouse-ear cress).